We begin with the raw amino-acid sequence, 307 residues long: Methionyl-tRNA formyltransferase (307 aa).

A (6S)-5,6,7,8-tetrahydrofolate-binding site is contributed by 109–112; the sequence is SLLP.

Belongs to the Fmt family.

The catalysed reaction is L-methionyl-tRNA(fMet) + (6R)-10-formyltetrahydrofolate = N-formyl-L-methionyl-tRNA(fMet) + (6S)-5,6,7,8-tetrahydrofolate + H(+). Its function is as follows. Attaches a formyl group to the free amino group of methionyl-tRNA(fMet). The formyl group appears to play a dual role in the initiator identity of N-formylmethionyl-tRNA by promoting its recognition by IF2 and preventing the misappropriation of this tRNA by the elongation apparatus. The chain is Methionyl-tRNA formyltransferase from Dechloromonas aromatica (strain RCB).